A 137-amino-acid polypeptide reads, in one-letter code: ATP synthase epsilon chain (137 aa).

It belongs to the ATPase epsilon chain family. In terms of assembly, F-type ATPases have 2 components, CF(1) - the catalytic core - and CF(0) - the membrane proton channel. CF(1) has five subunits: alpha(3), beta(3), gamma(1), delta(1), epsilon(1). CF(0) has three main subunits: a, b and c.

The protein resides in the cell inner membrane. Produces ATP from ADP in the presence of a proton gradient across the membrane. The chain is ATP synthase epsilon chain from Yersinia pestis bv. Antiqua (strain Antiqua).